The primary structure comprises 133 residues: Large ribosomal subunit protein eL32z (133 aa).

It belongs to the eukaryotic ribosomal protein eL32 family.

This chain is Large ribosomal subunit protein eL32z (RPL32A), found in Arabidopsis thaliana (Mouse-ear cress).